The sequence spans 534 residues: Peptide chain release factor 3 (534 aa).

In terms of domain architecture, tr-type G spans 9 to 278 (SRRRTFAIIS…FFVEHAPPPQ (270 aa)). GTP is bound by residues 18–25 (SHPDAGKT), 86–90 (DTPGH), and 140–143 (NKLD).

It belongs to the TRAFAC class translation factor GTPase superfamily. Classic translation factor GTPase family. PrfC subfamily.

The protein resides in the cytoplasm. Its function is as follows. Increases the formation of ribosomal termination complexes and stimulates activities of RF-1 and RF-2. It binds guanine nucleotides and has strong preference for UGA stop codons. It may interact directly with the ribosome. The stimulation of RF-1 and RF-2 is significantly reduced by GTP and GDP, but not by GMP. This chain is Peptide chain release factor 3, found in Stenotrophomonas maltophilia (strain R551-3).